We begin with the raw amino-acid sequence, 344 residues long: Cyclin-G2 (344 aa).

A disordered region spans residues 298–324 (CFDGSESEDSGEDMSCGEESLSSSPPS). The span at 302 to 313 (SESEDSGEDMSC) shows a compositional bias: acidic residues.

This sequence belongs to the cyclin family. Cyclin G subfamily. Highest levels in intestine. Intermediate levels in spleen, brain and kidney. Low levels in testis, stomach, pancreas, liver, salivary gland and muscle. According to PubMed:9139721 also abundant in thymus.

It localises to the cytoplasm. The protein resides in the nucleus. In terms of biological role, may play a role in growth regulation and in negative regulation of cell cycle progression. The sequence is that of Cyclin-G2 (Ccng2) from Mus musculus (Mouse).